We begin with the raw amino-acid sequence, 98 residues long: NADH-ubiquinone oxidoreductase chain 4L (98 aa).

Helical transmembrane passes span 1–21, 27–47, and 61–81; these read MIPT…GMLT, VASL…TTLI, and IILL…LISI.

It belongs to the complex I subunit 4L family. As to quaternary structure, core subunit of respiratory chain NADH dehydrogenase (Complex I) which is composed of 45 different subunits.

It localises to the mitochondrion inner membrane. The catalysed reaction is a ubiquinone + NADH + 5 H(+)(in) = a ubiquinol + NAD(+) + 4 H(+)(out). In terms of biological role, core subunit of the mitochondrial membrane respiratory chain NADH dehydrogenase (Complex I) which catalyzes electron transfer from NADH through the respiratory chain, using ubiquinone as an electron acceptor. Part of the enzyme membrane arm which is embedded in the lipid bilayer and involved in proton translocation. In Macaca nigra (Celebes black macaque), this protein is NADH-ubiquinone oxidoreductase chain 4L (MT-ND4L).